The following is a 345-amino-acid chain: Mariner Mos1 transposase (345 aa).

Residues 1–112 are DNA-binding; the sequence is MSSFVPNKEQ…VSNRLREMGK (112 aa). DNA-binding regions (H-T-H motif) lie at residues 24–55 and 89–110; these read TAAE…RFKS and QKQL…LREM. The interval 113 to 125 is linker; that stretch reads IQKVGRWVPHELN. Residues 126–345 are catalytic; the sequence is ERQMERRKNT…CVASDGKYLE (220 aa). 3 residues coordinate Mg(2+): Asp156, Asp249, and Asp284.

As to quaternary structure, homodimer. The complex has a trans arrangement, with each transposon end recognized by the DNA binding region of one transposase monomer and by the active site of the other monomer. Mg(2+) is required as a cofactor. The cofactor is Mn(2+).

It localises to the nucleus. Mediates transposition of transposon Mos1 by a 'cut and paste' mechanism. Transposases are sequence-specific nucleases and strand transferases that catalyze transposition through an ordered series of events: sequence-specific binding of transposase to the terminal inverted repeats (IR) present at each end of the transposon, pairing of the transposon IRs in a paired-end complex (PEC), cleavage of one or both DNA strands at each transposon end, capture of target DNA, and strand transfer to insert the transposon at a new site. The protein is Mariner Mos1 transposase (mariner\T) of Drosophila mauritiana (Fruit fly).